Reading from the N-terminus, the 150-residue chain is Large ribosomal subunit protein bL9 (150 aa).

The protein belongs to the bacterial ribosomal protein bL9 family.

Binds to the 23S rRNA. The sequence is that of Large ribosomal subunit protein bL9 from Ralstonia pickettii (strain 12J).